The sequence spans 129 residues: Small ribosomal subunit protein uS11 (129 aa).

It belongs to the universal ribosomal protein uS11 family. Part of the 30S ribosomal subunit. Interacts with proteins S7 and S18. Binds to IF-3.

In terms of biological role, located on the platform of the 30S subunit, it bridges several disparate RNA helices of the 16S rRNA. Forms part of the Shine-Dalgarno cleft in the 70S ribosome. The protein is Small ribosomal subunit protein uS11 of Allorhizobium ampelinum (strain ATCC BAA-846 / DSM 112012 / S4) (Agrobacterium vitis (strain S4)).